A 393-amino-acid polypeptide reads, in one-letter code: Formate-dependent phosphoribosylglycinamide formyltransferase (393 aa).

N(1)-(5-phospho-beta-D-ribosyl)glycinamide is bound by residues 22 to 23 (EL) and Glu-82. ATP contacts are provided by residues Arg-114, Lys-155, 160 to 165 (SSGKGQ), 195 to 198 (EGFI), and Glu-203. The 190-residue stretch at 119–308 (RLAAEELGLP…EFALHARAIL (190 aa)) folds into the ATP-grasp domain. Residues Glu-267 and Glu-279 each coordinate Mg(2+). N(1)-(5-phospho-beta-D-ribosyl)glycinamide is bound by residues Asp-286, Lys-356, and 363-364 (RR).

This sequence belongs to the PurK/PurT family. Homodimer.

The catalysed reaction is N(1)-(5-phospho-beta-D-ribosyl)glycinamide + formate + ATP = N(2)-formyl-N(1)-(5-phospho-beta-D-ribosyl)glycinamide + ADP + phosphate + H(+). The protein operates within purine metabolism; IMP biosynthesis via de novo pathway; N(2)-formyl-N(1)-(5-phospho-D-ribosyl)glycinamide from N(1)-(5-phospho-D-ribosyl)glycinamide (formate route): step 1/1. In terms of biological role, involved in the de novo purine biosynthesis. Catalyzes the transfer of formate to 5-phospho-ribosyl-glycinamide (GAR), producing 5-phospho-ribosyl-N-formylglycinamide (FGAR). Formate is provided by PurU via hydrolysis of 10-formyl-tetrahydrofolate. In Azotobacter vinelandii (strain DJ / ATCC BAA-1303), this protein is Formate-dependent phosphoribosylglycinamide formyltransferase.